The following is a 269-amino-acid chain: NAD kinase (269 aa).

Residue Asp-62 is the Proton acceptor of the active site. NAD(+) is bound by residues 62–63 (DG), 130–131 (NE), Lys-141, Arg-158, Asp-160, 171–176 (TAYAMS), Ala-195, and Gln-229.

Belongs to the NAD kinase family. Requires a divalent metal cation as cofactor.

The protein localises to the cytoplasm. The enzyme catalyses NAD(+) + ATP = ADP + NADP(+) + H(+). In terms of biological role, involved in the regulation of the intracellular balance of NAD and NADP, and is a key enzyme in the biosynthesis of NADP. Catalyzes specifically the phosphorylation on 2'-hydroxyl of the adenosine moiety of NAD to yield NADP. The chain is NAD kinase from Methanospirillum hungatei JF-1 (strain ATCC 27890 / DSM 864 / NBRC 100397 / JF-1).